Consider the following 77-residue polypeptide: Acyl carrier protein (77 aa).

The Carrier domain maps to 2–77 (SSIDKRIKEI…DAIDYITDHT (76 aa)). Residue S37 is modified to O-(pantetheine 4'-phosphoryl)serine.

Belongs to the acyl carrier protein (ACP) family. In terms of processing, 4'-phosphopantetheine is transferred from CoA to a specific serine of apo-ACP by AcpS. This modification is essential for activity because fatty acids are bound in thioester linkage to the sulfhydryl of the prosthetic group.

The protein localises to the cytoplasm. Its pathway is lipid metabolism; fatty acid biosynthesis. Functionally, carrier of the growing fatty acid chain in fatty acid biosynthesis. In Geotalea uraniireducens (strain Rf4) (Geobacter uraniireducens), this protein is Acyl carrier protein.